A 425-amino-acid chain; its full sequence is Serine--tRNA ligase (425 aa).

233–235 is an L-serine binding site; the sequence is TAE. 264–266 contributes to the ATP binding site; that stretch reads RRE. Glu-287 is a binding site for L-serine. 351–354 contacts ATP; sequence EVSS. Ser-386 is an L-serine binding site.

Belongs to the class-II aminoacyl-tRNA synthetase family. Type-1 seryl-tRNA synthetase subfamily. In terms of assembly, homodimer. The tRNA molecule binds across the dimer.

It localises to the cytoplasm. It carries out the reaction tRNA(Ser) + L-serine + ATP = L-seryl-tRNA(Ser) + AMP + diphosphate + H(+). It catalyses the reaction tRNA(Sec) + L-serine + ATP = L-seryl-tRNA(Sec) + AMP + diphosphate + H(+). The protein operates within aminoacyl-tRNA biosynthesis; selenocysteinyl-tRNA(Sec) biosynthesis; L-seryl-tRNA(Sec) from L-serine and tRNA(Sec): step 1/1. Catalyzes the attachment of serine to tRNA(Ser). Is also able to aminoacylate tRNA(Sec) with serine, to form the misacylated tRNA L-seryl-tRNA(Sec), which will be further converted into selenocysteinyl-tRNA(Sec). The sequence is that of Serine--tRNA ligase from Thermosipho melanesiensis (strain DSM 12029 / CIP 104789 / BI429).